Reading from the N-terminus, the 700-residue chain is Small ribosomal subunit protein uS3c (700 aa).

Insert stretches follow at residues 88-196 (NCHM…LGKF) and 282-587 (KPCT…FQTR).

It belongs to the universal ribosomal protein uS3 family. Part of the 30S ribosomal subunit.

The protein resides in the plastid. Its subcellular location is the chloroplast. This chain is Small ribosomal subunit protein uS3c (rps3), found in Tetradesmus obliquus (Green alga).